The primary structure comprises 238 residues: tRNA (guanine-N(7)-)-methyltransferase (238 aa).

Positions 68, 93, 120, and 143 each coordinate S-adenosyl-L-methionine. Residue Asp143 is part of the active site. Substrate contacts are provided by residues Lys147, Asp179, and 216–219; that span reads TKFE.

Belongs to the class I-like SAM-binding methyltransferase superfamily. TrmB family.

The enzyme catalyses guanosine(46) in tRNA + S-adenosyl-L-methionine = N(7)-methylguanosine(46) in tRNA + S-adenosyl-L-homocysteine. Its pathway is tRNA modification; N(7)-methylguanine-tRNA biosynthesis. Its function is as follows. Catalyzes the formation of N(7)-methylguanine at position 46 (m7G46) in tRNA. This is tRNA (guanine-N(7)-)-methyltransferase from Marinobacter nauticus (strain ATCC 700491 / DSM 11845 / VT8) (Marinobacter aquaeolei).